The sequence spans 461 residues: Fumarate hydratase class II (461 aa).

Substrate-binding positions include Ser-97–Thr-99, His-127–Asp-130, Ser-137–Asn-139, and Thr-185. His-186 functions as the Proton donor/acceptor in the catalytic mechanism. Ser-316 is an active-site residue. Residues Ser-317 and Lys-322–Asn-324 contribute to the substrate site.

It belongs to the class-II fumarase/aspartase family. Fumarase subfamily. Homotetramer.

The protein localises to the cytoplasm. It catalyses the reaction (S)-malate = fumarate + H2O. Its pathway is carbohydrate metabolism; tricarboxylic acid cycle; (S)-malate from fumarate: step 1/1. Functionally, involved in the TCA cycle. Catalyzes the stereospecific interconversion of fumarate to L-malate. This chain is Fumarate hydratase class II, found in Staphylococcus epidermidis (strain ATCC 35984 / DSM 28319 / BCRC 17069 / CCUG 31568 / BM 3577 / RP62A).